We begin with the raw amino-acid sequence, 259 residues long: Polycomb group RING finger protein 1 (259 aa).

The RING-type zinc finger occupies 45–84; that stretch reads CYLCAGYFIDATTITECLHTFCKSCIVKYLQTSKYCPLCN.

Component of a PRC1-like complex.

Its subcellular location is the nucleus. In terms of biological role, component of a Polycomb group (PcG) multiprotein PRC1-like complex, a complex class required to maintain the transcriptionally repressive state of many genes, including Hox genes, throughout development. PcG PRC1 complex acts via chromatin remodeling and modification of histones; it mediates monoubiquitination of histone H2A 'Lys-119', rendering chromatin heritably changed in its expressibility. This Xenopus laevis (African clawed frog) protein is Polycomb group RING finger protein 1 (pcgf1).